A 216-amino-acid chain; its full sequence is Soluble inorganic pyrophosphatase 5 (216 aa).

The disordered stretch occupies residues 1 to 20; sequence MNGEEVKTSQPQKKLQNPTP. The span at 8-20 shows a compositional bias: polar residues; sequence TSQPQKKLQNPTP. Residues Lys-66 and Arg-80 each contribute to the substrate site. Residue Tyr-88 is the Proton donor of the active site. Tyr-92 contacts substrate. Residues Asp-102, Asp-107, and Asp-139 each contribute to the Mg(2+) site. Tyr-176 is a binding site for substrate.

This sequence belongs to the PPase family. The cofactor is Mg(2+).

The protein resides in the cytoplasm. It carries out the reaction diphosphate + H2O = 2 phosphate + H(+). This Arabidopsis thaliana (Mouse-ear cress) protein is Soluble inorganic pyrophosphatase 5.